Reading from the N-terminus, the 243-residue chain is Carboxy-S-adenosyl-L-methionine synthase (243 aa).

S-adenosyl-L-methionine-binding positions include Y35, 68–70 (GCS), 92–93 (DN), and R199.

It belongs to the class I-like SAM-binding methyltransferase superfamily. Cx-SAM synthase family. In terms of assembly, homodimer.

The enzyme catalyses prephenate + S-adenosyl-L-methionine = carboxy-S-adenosyl-L-methionine + 3-phenylpyruvate + H2O. Its function is as follows. Catalyzes the conversion of S-adenosyl-L-methionine (SAM) to carboxy-S-adenosyl-L-methionine (Cx-SAM). In Helicobacter pylori (strain J99 / ATCC 700824) (Campylobacter pylori J99), this protein is Carboxy-S-adenosyl-L-methionine synthase.